Here is an 83-residue protein sequence, read N- to C-terminus: Small ribosomal subunit protein bS16 (83 aa).

Belongs to the bacterial ribosomal protein bS16 family.

In Shewanella frigidimarina (strain NCIMB 400), this protein is Small ribosomal subunit protein bS16.